A 487-amino-acid chain; its full sequence is GTPase Der (487 aa).

EngA-type G domains follow at residues 3–167 (FTLA…EGFA) and 203–378 (LQIA…DIWN). Residues 9–16 (GRPNVGKS), 56–60 (DTAGL), 119–122 (NKAE), 209–216 (GRPNAGKS), 256–260 (DTAGM), and 321–324 (NKWD) contribute to the GTP site. One can recognise a KH-like domain in the interval 379 to 463 (RRITTARLNT…PIRLTMRGQG (85 aa)). A disordered region spans residues 451–487 (PGTPIRLTMRGQGDKNPFKERKFRTPSRLRKHLGKKD). Over residues 471–487 (RKFRTPSRLRKHLGKKD) the composition is skewed to basic residues.

It belongs to the TRAFAC class TrmE-Era-EngA-EngB-Septin-like GTPase superfamily. EngA (Der) GTPase family. As to quaternary structure, associates with the 50S ribosomal subunit.

Its function is as follows. GTPase that plays an essential role in the late steps of ribosome biogenesis. This is GTPase Der from Cereibacter sphaeroides (strain ATCC 17029 / ATH 2.4.9) (Rhodobacter sphaeroides).